A 308-amino-acid chain; its full sequence is uncharacterized protein (308 aa).

The first 17 residues, 1-17, serve as a signal peptide directing secretion; sequence MKSLALLLSLLINFSIG. N-linked (GlcNAc...) asparagine glycans are attached at residues Asn13, Asn91, Asn159, and Asn210. Residues 213–308 form a disordered region; sequence DEISGGTGAG…HDNYISSFCT (96 aa). Composition is skewed to gly residues over residues 217 to 231 and 239 to 252; these read GGTG…GSGS and SDGG…GSGS. The segment covering 267 to 284 has biased composition (low complexity); sequence NKNNNKNKNNNNNNNNYN.

The protein resides in the secreted. This is an uncharacterized protein from Dictyostelium discoideum (Social amoeba).